Consider the following 745-residue polypeptide: Polyribonucleotide nucleotidyltransferase (745 aa).

Residues Asp-487 and Asp-493 each coordinate Mg(2+). The KH domain maps to Pro-554–Ile-613. The 69-residue stretch at Gly-623–Lys-691 folds into the S1 motif domain. The disordered stretch occupies residues Gln-695–Glu-745. Residues Ile-701–Glu-745 are compositionally biased toward basic and acidic residues.

The protein belongs to the polyribonucleotide nucleotidyltransferase family. It depends on Mg(2+) as a cofactor.

It is found in the cytoplasm. It catalyses the reaction RNA(n+1) + phosphate = RNA(n) + a ribonucleoside 5'-diphosphate. Its function is as follows. Involved in mRNA degradation. Catalyzes the phosphorolysis of single-stranded polyribonucleotides processively in the 3'- to 5'-direction. The chain is Polyribonucleotide nucleotidyltransferase from Methylorubrum populi (strain ATCC BAA-705 / NCIMB 13946 / BJ001) (Methylobacterium populi).